The sequence spans 305 residues: Ribonuclease BN (305 aa).

Residues His-64, His-66, Asp-68, His-69, His-141, Asp-212, and His-270 each contribute to the Zn(2+) site. Asp-68 functions as the Proton acceptor in the catalytic mechanism.

Belongs to the RNase Z family. RNase BN subfamily. As to quaternary structure, homodimer. It depends on Zn(2+) as a cofactor.

Functionally, zinc phosphodiesterase, which has both exoribonuclease and endoribonuclease activities. This is Ribonuclease BN from Escherichia coli O17:K52:H18 (strain UMN026 / ExPEC).